Reading from the N-terminus, the 199-residue chain is Recombination protein RecR (199 aa).

The segment at 57 to 72 (CSICGNITEDDPCDIC) adopts a C4-type zinc-finger fold. Residues 80 to 176 (KAVLVVEDSK…KVTRLAHGLS (97 aa)) enclose the Toprim domain.

This sequence belongs to the RecR family.

Its function is as follows. May play a role in DNA repair. It seems to be involved in an RecBC-independent recombinational process of DNA repair. It may act with RecF and RecO. This Pediococcus pentosaceus (strain ATCC 25745 / CCUG 21536 / LMG 10740 / 183-1w) protein is Recombination protein RecR.